Reading from the N-terminus, the 212-residue chain is A-kinase-interacting protein 1 (212 aa).

Interacts with PRKACA and RELA.

It localises to the nucleus. Enhances NF-kappa-B transcriptional activity by regulating the nuclear localization of the NF-kappa-B subunit RELA and promoting the phosphorylation of RELA by PRKACA. Regulates the effect of the cAMP-dependent protein kinase signaling pathway on the NF-kappa-B activation cascade. The protein is A-kinase-interacting protein 1 (Akip1) of Mus musculus (Mouse).